The primary structure comprises 275 residues: Reticulon-like protein B1 (275 aa).

2 stretches are compositionally biased toward basic and acidic residues: residues 1 to 10 (MAEEHKHDES) and 20 to 38 (VVER…HHGG). Residues 1–68 (MAEEHKHDES…PSSPSSSMKS (68 aa)) are disordered. Position 2 is an N-acetylalanine (Ala2). The span at 59-68 (PSSPSSSMKS) shows a compositional bias: low complexity. Residues 89–274 (PADIFMWKNK…PLGPLKNKKK (186 aa)) form the Reticulon domain. The next 3 membrane-spanning stretches (helical) occupy residues 99-119 (KMSG…ELME), 120-140 (YHLL…LFLW), and 194-214 (FLIA…FNFL).

Interacts with VirB2. In terms of tissue distribution, predominantly expressed in root tissues.

It is found in the endoplasmic reticulum membrane. The protein localises to the cell membrane. Plays a role in the Agrobacterium-mediated plant transformation via its interaction with VirB2, the major component of the T-pilus. The sequence is that of Reticulon-like protein B1 (RTNLB1) from Arabidopsis thaliana (Mouse-ear cress).